An 805-amino-acid chain; its full sequence is Angiotensin-converting enzyme 2 (805 aa).

The N-terminal stretch at 1–17 is a signal peptide; the sequence is MSGSFWLLLSFAALTAA. The Extracellular portion of the chain corresponds to 18 to 740; that stretch reads QSTTEELAKT…LSPPYRPPVT (723 aa). Residues 19–607 form the Peptidase M2 domain; it reads STTEELAKTF…QNRNSFVGWD (589 aa). The interaction with SARS S protein stretch occupies residues 30–41; the sequence is ETFNYEAQELSY. A glycan (N-linked (GlcNAc...) asparagine) is linked at N53. Interaction with SARS S protein stretches follow at residues 82–84 and 90–93; these read TYP and DAKI. An intrachain disulfide couples C133 to C141. Position 169 (R169) interacts with chloride. N216 is a glycosylation site (N-linked (GlcNAc...) asparagine). R273 is a substrate binding site. N-linked (GlcNAc...) asparagine glycosylation is present at N322. Cysteines 344 and 361 form a disulfide. 345-346 contributes to the substrate binding site; sequence HP. The interaction with SARS S protein stretch occupies residues 353-357; that stretch reads KGDFR. Zn(2+) is bound at residue H374. E375 acts as the Proton acceptor in catalysis. Positions 378 and 402 each coordinate Zn(2+). Chloride-binding residues include W477 and K481. Residue H505 is the Proton donor of the active site. Residue Y515 participates in substrate binding. The cysteines at positions 530 and 542 are disulfide-linked. N546 is a glycosylation site (N-linked (GlcNAc...) asparagine). A Collectrin-like domain is found at 614–805; the sequence is SDQSIKVRIS…QHADDVQTSF (192 aa). Positions 652-659 are essential for cleavage by ADAM17; it reads REYFSKVK. Residues N660 and N690 are each glycosylated (N-linked (GlcNAc...) asparagine). The essential for cleavage by TMPRSS11D and TMPRSS2 stretch occupies residues 697-716; it reads RSEVEDAIRMSRSRINDAFR. The helical transmembrane segment at 741-761 threads the bilayer; it reads IWLIVFGVVMGAIVVGIVLLI. Over 762-805 the chain is Cytoplasmic; the sequence is VSGIRNRRKNDQAGSEENPYASVDLNKGENNPGFQHADDVQTSF. A disordered region spans residues 771–805; the sequence is NDQAGSEENPYASVDLNKGENNPGFQHADDVQTSF. Positions 778–786 match the LIR motif; sequence ENPYASVDL. Phosphotyrosine is present on Y781. An Endocytic sorting signal motif is present at residues 781 to 784; that stretch reads YASV. The SH2-binding motif lies at 781-785; it reads YASVD. Phosphoserine is present on S783. Residues 792–795 carry the PTB motif; sequence NPGF. Positions 803–805 match the PDZ-binding motif; sequence TSF.

The protein belongs to the peptidase M2 family. As to quaternary structure, homodimer. Interacts with the catalytically active form of TMPRSS2. Interacts with SLC6A19; this interaction is essential for expression and function of SLC6A19 in intestine. Interacts with ITGA5:ITGB1. Probably interacts (via endocytic sorting signal motif) with AP2M1; the interaction is inhibited by phosphorylation of Tyr-781. Interacts (via PDZ-binding motif) with NHERF1 (via PDZ domains); the interaction may enhance ACE2 membrane residence. (Microbial infection) Interacts with SARS-CoV S protein. Requires Zn(2+) as cofactor. The cofactor is chloride. In terms of processing, proteolytic cleavage by ADAM17 generates a secreted form. Also cleaved by serine proteases: TMPRSS2, TMPRSS11D and HPN/TMPRSS1. Phosphorylated. Phosphorylation at Tyr-781 probably inhibits interaction with AP2M1 and enables interactions with proteins containing SH2 domains.

The protein resides in the secreted. Its subcellular location is the cell membrane. It localises to the cytoplasm. It is found in the cell projection. The protein localises to the cilium. The protein resides in the apical cell membrane. It carries out the reaction angiotensin II + H2O = angiotensin-(1-7) + L-phenylalanine. The enzyme catalyses angiotensin I + H2O = angiotensin-(1-9) + L-leucine. Essential counter-regulatory carboxypeptidase of the renin-angiotensin hormone system that is a critical regulator of blood volume, systemic vascular resistance, and thus cardiovascular homeostasis. Converts angiotensin I to angiotensin 1-9, a nine-amino acid peptide with anti-hypertrophic effects in cardiomyocytes, and angiotensin II to angiotensin 1-7, which then acts as a beneficial vasodilator and anti-proliferation agent, counterbalancing the actions of the vasoconstrictor angiotensin II. Also removes the C-terminal residue from three other vasoactive peptides, neurotensin, kinetensin, and des-Arg bradykinin, but is not active on bradykinin. Also cleaves other biological peptides, such as apelins, casomorphins and dynorphin A. Plays an important role in amino acid transport by acting as binding partner of amino acid transporter SLC6A19 in intestine, regulating trafficking, expression on the cell surface, and its catalytic activity. Its function is as follows. (Microbial infection) Acts as a receptor for human coronavirus SARS. This is Angiotensin-converting enzyme 2 (ACE2) from Paguma larvata (Masked palm civet).